A 101-amino-acid chain; its full sequence is NADH-quinone oxidoreductase subunit K (101 aa).

Transmembrane regions (helical) follow at residues Leu4 to Leu24, Ile30 to Phe50, and Phe62 to Val82.

This sequence belongs to the complex I subunit 4L family. NDH-1 is composed of 14 different subunits. Subunits NuoA, H, J, K, L, M, N constitute the membrane sector of the complex.

The protein localises to the cell inner membrane. It catalyses the reaction a quinone + NADH + 5 H(+)(in) = a quinol + NAD(+) + 4 H(+)(out). Its function is as follows. NDH-1 shuttles electrons from NADH, via FMN and iron-sulfur (Fe-S) centers, to quinones in the respiratory chain. The immediate electron acceptor for the enzyme in this species is believed to be ubiquinone. Couples the redox reaction to proton translocation (for every two electrons transferred, four hydrogen ions are translocated across the cytoplasmic membrane), and thus conserves the redox energy in a proton gradient. The protein is NADH-quinone oxidoreductase subunit K of Xanthomonas axonopodis pv. citri (strain 306).